Here is a 230-residue protein sequence, read N- to C-terminus: Type II restriction enzyme Eco47I (230 aa).

It carries out the reaction Endonucleolytic cleavage of DNA to give specific double-stranded fragments with terminal 5'-phosphates.. In terms of biological role, a P subtype restriction enzyme that recognizes the double-stranded sequence 5'-GGWCC-3' and cleaves after G-1. The protein is Type II restriction enzyme Eco47I of Escherichia coli.